We begin with the raw amino-acid sequence, 187 residues long: Large ribosomal subunit protein uL6 (187 aa).

The protein belongs to the universal ribosomal protein uL6 family. As to quaternary structure, part of the 50S ribosomal subunit.

In terms of biological role, this protein binds to the 23S rRNA, and is important in its secondary structure. It is located near the subunit interface in the base of the L7/L12 stalk, and near the tRNA binding site of the peptidyltransferase center. This is Large ribosomal subunit protein uL6 from Roseiflexus castenholzii (strain DSM 13941 / HLO8).